The chain runs to 289 residues: Fumagillin beta-trans-bergamotene synthase af520 (289 aa).

The next 6 helical transmembrane spans lie at 35–55 (AVAL…GFLW), 95–115 (TLLY…TNTI), 142–162 (LIGA…FDGG), 165–185 (LHGL…TTGH), 222–242 (AWTI…LAYV), and 262–282 (YVSY…PIFP).

Belongs to the paxB family.

The protein localises to the membrane. The enzyme catalyses (2E,6E)-farnesyl diphosphate = (+)-exo-beta-bergamotene + diphosphate. It functions in the pathway secondary metabolite biosynthesis; terpenoid biosynthesis. Its function is as follows. Beta-trans-bergamotene synthase; part of the gene cluster that mediates the biosynthesis of fumagillin, a meroterpenoid that has numerous biological activities including irreversible inhibition of human type 2 methionine aminopeptidase (METAP2). Within the pathway, the membrane-bound fumagillin beta-trans-bergamotene synthase af520 converts farnesyl pyrophosphate (FPP) to beta-trans-bergamotene. The pathway begins with the conversion of FPP to beta-trans-bergamotene by af520. The multifunctional cytochrome P450 monooxygenase af510 then converts beta-trans-bergamotene into 5-keto-demethoxyfumagillol via several oxydation steps. 5-keto-demethoxyfumagillol is then subjected to successive C-6 hydroxylation and O-methylation by the dioxygenase af480 and O-methyltransferase af390-400, respectively, to yield 5-keto-fumagillol, which is then stereoselectively reduced by the keto-reductase af490 to 5R-hydroxy-seco-sesquiterpene. The next step is the polyketide transferase af380-catalyzed transfer of a dodecapentaenoyl group synthesized by the polyketide synthase af370 onto 5R-hydroxy-seco-sesquiterpene which leads to the production of prefumagillin. Finally, oxidative cleavage by the monooxygenase af470 converts prefumagillin to fumagillin. This chain is Fumagillin beta-trans-bergamotene synthase af520, found in Aspergillus fumigatus (strain ATCC MYA-4609 / CBS 101355 / FGSC A1100 / Af293) (Neosartorya fumigata).